The chain runs to 906 residues: Ectonucleotide pyrophosphatase/phosphodiesterase family member 1 (906 aa).

The interval 1 to 25 (MERDGEQAGQGPRHGPAGNGRELES) is disordered. The Cytoplasmic segment spans residues 1–58 (MERDGEQAGQGPRHGPAGNGRELESPAAASLLAPMDLGEEPLEKAERARTAKDPNTYK). Phosphoserine is present on Ser-25. The Di-leucine motif motif lies at 27 to 34 (AAASLLAP). A helical; Signal-anchor for type II membrane protein transmembrane segment spans residues 59 to 79 (VLSLVLSVCVLTTILGCIFGL). Residues 80–906 (KPSCAKEVKS…THLPIFSQED (827 aa)) lie on the Extracellular side of the membrane. SMB domains lie at 86 to 126 (EVKS…VEPT) and 127 to 170 (HIWT…QEKK). 10 disulfide bridges follow: Cys-90-Cys-104, Cys-94-Cys-122, Cys-102-Cys-115, Cys-108-Cys-114, Cys-131-Cys-148, Cys-136-Cys-166, Cys-146-Cys-159, Cys-152-Cys-158, Cys-177-Cys-223, and Cys-185-Cys-397. An N-linked (GlcNAc...) asparagine glycan is attached at Asn-161. Residues 173 to 573 (VEEACETIDA…APNNESHGSL (401 aa)) are phosphodiesterase. 3 residues coordinate AMP: Asp-200, Thr-238, and Asn-259. Asp-200 and Thr-238 together coordinate Zn(2+). The AMP-threonine intermediate role is filled by Thr-238. CMP-binding residues include Thr-238 and Asn-259. Positions 238 and 259 each coordinate dTMP. Residues Thr-238 and Asn-259 each contribute to the GMP site. At Thr-238 the chain carries Phosphothreonine. Asn-267 is a glycosylation site (N-linked (GlcNAc...) asparagine). 3 residues coordinate GMP: Leu-272, Lys-277, and Tyr-322. Lys-277 and Tyr-322 together coordinate AMP. Residues Lys-277 and Tyr-322 each contribute to the CMP site. Tyr-322 serves as a coordination point for dTMP. N-linked (GlcNAc...) asparagine glycosylation is present at Asn-323. Asp-358 lines the AMP pocket. Zn(2+) is bound by residues Asp-358, His-362, Asp-405, and His-406. Asp-358 is a CMP binding site. Asp-358 serves as a coordination point for dTMP. Asp-358 is a binding site for GMP. His-362 serves as a coordination point for 2',3'-cGAMP. His-406 contacts AMP. Residue His-406 participates in CMP binding. His-406 is a binding site for dTMP. His-406 lines the GMP pocket. Disulfide bonds link Cys-413–Cys-512, Cys-462–Cys-849, Cys-596–Cys-653, Cys-607–Cys-707, Cys-609–Cys-692, and Cys-819–Cys-829. N-linked (GlcNAc...) asparagine glycosylation occurs at Asn-459. Ser-514 serves as a coordination point for 2',3'-cGAMP. Residue His-517 participates in AMP binding. His-517 contributes to the Zn(2+) binding site. His-517 provides a ligand contact to CMP. DTMP is bound at residue His-517. Residue His-517 participates in GMP binding. N-linked (GlcNAc...) asparagine glycosylation is found at Asn-567 and Asn-624. The interval 579–628 (KPIYTPSHPKEESFLSQCPIKSVSSDLGCTCDPSIVPIMDFEKQFNLTTD) is linker. The segment at 635–906 (SMTVPNGRPR…THLPIFSQED (272 aa)) is nuclease-like domain. The Ca(2+) site is built by Asp-781, Asp-783, Asp-785, Arg-787, and Asp-789.

It belongs to the nucleotide pyrophosphatase/phosphodiesterase family. As to quaternary structure, ectonucleotide pyrophosphatase/phosphodiesterase family member 1: Homodimer. Ectonucleotide pyrophosphatase/phosphodiesterase family member 1: Interacts with INSR; leading to inhibit INSR autophosphorylation and subsequent activation of INSR kinase activity. Ectonucleotide pyrophosphatase/phosphodiesterase family member 1, secreted form: Monomeric. Requires Zn(2+) as cofactor. The secreted form is produced through cleavage at Lys-85 by intracellular processing.

It is found in the cell membrane. Its subcellular location is the basolateral cell membrane. It localises to the secreted. It catalyses the reaction Hydrolytically removes 5'-nucleotides successively from the 3'-hydroxy termini of 3'-hydroxy-terminated oligonucleotides.. It carries out the reaction a ribonucleoside 5'-triphosphate + H2O = a ribonucleoside 5'-phosphate + diphosphate + H(+). The enzyme catalyses ATP + H2O = AMP + diphosphate + H(+). The catalysed reaction is UTP + H2O = UMP + diphosphate + H(+). It catalyses the reaction GTP + H2O = GMP + diphosphate + H(+). It carries out the reaction CTP + H2O = CMP + diphosphate + H(+). The enzyme catalyses 2',3'-cGAMP + 2 H2O = GMP + AMP + 2 H(+). The catalysed reaction is P(1),P(4)-bis(5'-adenosyl) tetraphosphate + H2O = AMP + ATP + 2 H(+). It catalyses the reaction 3',5'-cyclic AMP + H2O = AMP + H(+). With respect to regulation, at low concentrations of ATP, a phosphorylated intermediate is formed which inhibits further hydrolysis. Nucleotide pyrophosphatase that generates diphosphate (PPi) and functions in bone mineralization and soft tissue calcification by regulating pyrophosphate levels. PPi inhibits bone mineralization and soft tissue calcification by binding to nascent hydroxyapatite crystals, thereby preventing further growth of these crystals. Preferentially hydrolyzes ATP, but can also hydrolyze other nucleoside 5' triphosphates such as GTP, CTP and UTP to their corresponding monophosphates with release of pyrophosphate, as well as diadenosine polyphosphates, and also 3',5'-cAMP to AMP. May also be involved in the regulation of the availability of nucleotide sugars in the endoplasmic reticulum and Golgi, and the regulation of purinergic signaling. Inhibits ectopic joint calcification and maintains articular chondrocytes by repressing hedgehog signaling; it is however unclear whether hedgehog inhibition is direct or indirect. Appears to modulate insulin sensitivity. Also involved in melanogenesis. Also able to hydrolyze 2',3'-cGAMP (cyclic GMP-AMP), a second messenger that activates TMEM173/STING and triggers type-I interferon production. 2',3'-cGAMP degradation takes place in the lumen or extracellular space, and not in the cytosol where it is produced; the role of 2',3'-cGAMP hydrolysis is therefore unclear. Not able to hydrolyze the 2',3'-cGAMP linkage isomer 3'-3'-cGAMP. In Rattus norvegicus (Rat), this protein is Ectonucleotide pyrophosphatase/phosphodiesterase family member 1.